Here is a 229-residue protein sequence, read N- to C-terminus: 2,3-bisphosphoglycerate-dependent phosphoglycerate mutase (229 aa).

Substrate-binding positions include 8-15, 21-22, R60, 87-90, K98, 114-115, and 183-184; these read RHGESAWN, TG, ERHY, RR, and GN. H9 (tele-phosphohistidine intermediate) is an active-site residue. The Proton donor/acceptor role is filled by E87.

Belongs to the phosphoglycerate mutase family. BPG-dependent PGAM subfamily. Homodimer.

It catalyses the reaction (2R)-2-phosphoglycerate = (2R)-3-phosphoglycerate. It functions in the pathway carbohydrate degradation; glycolysis; pyruvate from D-glyceraldehyde 3-phosphate: step 3/5. In terms of biological role, catalyzes the interconversion of 2-phosphoglycerate and 3-phosphoglycerate. The polypeptide is 2,3-bisphosphoglycerate-dependent phosphoglycerate mutase (Polynucleobacter necessarius subsp. necessarius (strain STIR1)).